We begin with the raw amino-acid sequence, 229 residues long: Enolase-phosphatase E1 (229 aa).

This sequence belongs to the HAD-like hydrolase superfamily. MasA/MtnC family. In terms of assembly, monomer. Mg(2+) serves as cofactor.

It catalyses the reaction 5-methylsulfanyl-2,3-dioxopentyl phosphate + H2O = 1,2-dihydroxy-5-(methylsulfanyl)pent-1-en-3-one + phosphate. It functions in the pathway amino-acid biosynthesis; L-methionine biosynthesis via salvage pathway; L-methionine from S-methyl-5-thio-alpha-D-ribose 1-phosphate: step 3/6. It participates in amino-acid biosynthesis; L-methionine biosynthesis via salvage pathway; L-methionine from S-methyl-5-thio-alpha-D-ribose 1-phosphate: step 4/6. Its function is as follows. Bifunctional enzyme that catalyzes the enolization of 2,3-diketo-5-methylthiopentyl-1-phosphate (DK-MTP-1-P) into the intermediate 2-hydroxy-3-keto-5-methylthiopentenyl-1-phosphate (HK-MTPenyl-1-P), which is then dephosphorylated to form the acireductone 1,2-dihydroxy-3-keto-5-methylthiopentene (DHK-MTPene). The sequence is that of Enolase-phosphatase E1 from Yersinia enterocolitica serotype O:8 / biotype 1B (strain NCTC 13174 / 8081).